A 481-amino-acid chain; its full sequence is Proline--tRNA ligase (481 aa).

It belongs to the class-II aminoacyl-tRNA synthetase family. ProS type 3 subfamily. In terms of assembly, homodimer.

It is found in the cytoplasm. The enzyme catalyses tRNA(Pro) + L-proline + ATP = L-prolyl-tRNA(Pro) + AMP + diphosphate. Functionally, catalyzes the attachment of proline to tRNA(Pro) in a two-step reaction: proline is first activated by ATP to form Pro-AMP and then transferred to the acceptor end of tRNA(Pro). The chain is Proline--tRNA ligase from Chlorobium luteolum (strain DSM 273 / BCRC 81028 / 2530) (Pelodictyon luteolum).